We begin with the raw amino-acid sequence, 188 residues long: Peptide deformylase (188 aa).

Fe cation contacts are provided by Cys94 and His136. Glu137 is an active-site residue. Fe cation is bound at residue His140.

It belongs to the polypeptide deformylase family. Fe(2+) is required as a cofactor.

It carries out the reaction N-terminal N-formyl-L-methionyl-[peptide] + H2O = N-terminal L-methionyl-[peptide] + formate. Its function is as follows. Removes the formyl group from the N-terminal Met of newly synthesized proteins. Requires at least a dipeptide for an efficient rate of reaction. N-terminal L-methionine is a prerequisite for activity but the enzyme has broad specificity at other positions. This is Peptide deformylase from Pelodictyon phaeoclathratiforme (strain DSM 5477 / BU-1).